The primary structure comprises 90 residues: Iron oxidase (90 aa).

A signal peptide (tat-type signal) is located at residues 1 to 37 (MSEKDKMITRRDALRNIAVVVGSVATTTMMGVGVADA). Residues cysteine 57, cysteine 60, cysteine 69, and cysteine 82 each coordinate [4Fe-4S] cluster.

It belongs to the high-potential iron-sulfur protein (HiPIP) family. In terms of assembly, homomultimer. Predicted to be exported by the Tat system. The position of the signal peptide cleavage has been experimentally proven.

The protein localises to the periplasm. In terms of biological role, catalyzes the oxidation of Fe(2+) to Fe(3+) coupled to cytochrome c552 reduction. The chain is Iron oxidase (iro) from Acidithiobacillus ferrooxidans (Thiobacillus ferrooxidans).